Here is a 307-residue protein sequence, read N- to C-terminus: Nucleotide-binding protein Sca_0414 (307 aa).

19–26 is an ATP binding site; that stretch reads GMSGAGKS. Residue 70–73 coordinates GTP; it reads DLRG.

This sequence belongs to the RapZ-like family.

Functionally, displays ATPase and GTPase activities. In Staphylococcus carnosus (strain TM300), this protein is Nucleotide-binding protein Sca_0414.